A 434-amino-acid chain; its full sequence is Eukaryotic translation initiation factor 3 subunit E (434 aa).

Residues Phe219–Leu392 enclose the PCI domain.

This sequence belongs to the eIF-3 subunit E family. In terms of assembly, component of the eukaryotic translation initiation factor 3 (eIF-3) complex. The eIF-3 complex interacts with pix. Interacts with mxt.

The protein resides in the cytoplasm. Its function is as follows. Component of the eukaryotic translation initiation factor 3 (eIF-3) complex, which is involved in protein synthesis of a specialized repertoire of mRNAs and, together with other initiation factors, stimulates binding of mRNA and methionyl-tRNAi to the 40S ribosome. The eIF-3 complex specifically targets and initiates translation of a subset of mRNAs involved in cell proliferation. This Drosophila persimilis (Fruit fly) protein is Eukaryotic translation initiation factor 3 subunit E (eIF3-S6).